A 113-amino-acid polypeptide reads, in one-letter code: MARGGFPNMGGANMNNLMKQAQKLQQDMEKMQGEMEKKEFSATVGGGAVTAVANGKKQIVDIKIEPEVVDEDDIEMLEDLIMSACNEALKKAEEDTSSEVKRLTGGMNLPGMF.

The span at 93-102 (EEDTSSEVKR) shows a compositional bias: basic and acidic residues. The interval 93–113 (EEDTSSEVKRLTGGMNLPGMF) is disordered.

It belongs to the YbaB/EbfC family. In terms of assembly, homodimer.

The protein resides in the cytoplasm. It is found in the nucleoid. Its function is as follows. Binds to DNA and alters its conformation. May be involved in regulation of gene expression, nucleoid organization and DNA protection. The sequence is that of Nucleoid-associated protein CLJ_B0037 from Clostridium botulinum (strain 657 / Type Ba4).